Consider the following 342-residue polypeptide: S-adenosylmethionine:tRNA ribosyltransferase-isomerase (342 aa).

The protein belongs to the QueA family. In terms of assembly, monomer.

It localises to the cytoplasm. It carries out the reaction 7-aminomethyl-7-carbaguanosine(34) in tRNA + S-adenosyl-L-methionine = epoxyqueuosine(34) in tRNA + adenine + L-methionine + 2 H(+). Its pathway is tRNA modification; tRNA-queuosine biosynthesis. In terms of biological role, transfers and isomerizes the ribose moiety from AdoMet to the 7-aminomethyl group of 7-deazaguanine (preQ1-tRNA) to give epoxyqueuosine (oQ-tRNA). This chain is S-adenosylmethionine:tRNA ribosyltransferase-isomerase, found in Bacillus licheniformis (strain ATCC 14580 / DSM 13 / JCM 2505 / CCUG 7422 / NBRC 12200 / NCIMB 9375 / NCTC 10341 / NRRL NRS-1264 / Gibson 46).